A 504-amino-acid polypeptide reads, in one-letter code: MTHTNGFDALHAHAQRLRGAAIPALLAAEPQRPTQYARQVGPLYFNFARQKYDRAALDALFAIARERDLAGAFQRLFRGEQVNVTEQRAALHTALRGDLTDAPVASDAYATAAEVRQRVGALIQQLEGTDVTDIVSVGIGGSDLGPRLVADALRAPSGARFRVHFVSNVDGAAMQRTLATLDPARTAGILISKTFGTQETLLNGSILHAWLGGSERLYAVSANPERAAKAFDIAPGRVLPMWDWVGGRYSLWSAVGFPIALAIGFERFEQLLDGAAQFDAHVLNTPLEENVAVLHGLTAVWNRNLLGSATHAVMTYDQRLALLPAYLQQLVMESLGKRVKLDGAAVDSDTVAVWWGGAGTDVQHSFFQALHQGTSVVPADFIGTVHNDDPYAENHVALMANVLAQTEALANGQDSSDPHRSYPGGRPSTVILLDALTPQALGALISMYEHSVYVQSVMWGINAFDQFGVELGKQLASQLLPALKGEAADVADPVTRELLAKLRG.

Glutamate 333 functions as the Proton donor in the catalytic mechanism. Catalysis depends on residues histidine 364 and lysine 473.

The protein belongs to the GPI family.

It is found in the cytoplasm. It carries out the reaction alpha-D-glucose 6-phosphate = beta-D-fructose 6-phosphate. Its pathway is carbohydrate biosynthesis; gluconeogenesis. It participates in carbohydrate degradation; glycolysis; D-glyceraldehyde 3-phosphate and glycerone phosphate from D-glucose: step 2/4. In terms of biological role, catalyzes the reversible isomerization of glucose-6-phosphate to fructose-6-phosphate. The sequence is that of Glucose-6-phosphate isomerase from Xanthomonas campestris pv. campestris (strain B100).